The following is a 319-amino-acid chain: Transmembrane and ubiquitin-like domain-containing protein 2 (319 aa).

The helical transmembrane segment at 36 to 56 threads the bilayer; the sequence is VMVVAGVVALTLALVLAWLST. Disordered stretches follow at residues 88–128 and 145–165; these read VNQG…ARGE and RQAG…DGSC. The segment covering 95–111 has biased composition (basic and acidic residues); the sequence is PTEHPHPSGGNDDKAEE. The 74-residue stretch at 173 to 246 folds into the Ubiquitin-like domain; that stretch reads INVRLKFLND…IHCHRSPPGA (74 aa). A run of 2 helical transmembrane segments spans residues 264 to 284 and 298 to 318; these read LGVN…GVVW and ATIS…GMYG.

The protein resides in the membrane. The polypeptide is Transmembrane and ubiquitin-like domain-containing protein 2 (Tmub2) (Mus musculus (Mouse)).